A 404-amino-acid polypeptide reads, in one-letter code: MASSFPALQFKVVARCSTTRARVTDIQLPHGLVESPVFMPVGTQASLKGVLPEQLDALGCKIMLNNTYHLGLKPGQEVLDTVGGAHRFQSWNKNILTDSGGFQMVSLLKLATITEDGVTFLSPRDGTPMLLTPEHSISLQNSIGSDIMMQLDDVVHTLTESKRMEEAMYRSIRWLDRCIQAHKRPETQNLFCIIQGGLDKRLREICCREMVKRNTPGIAVGGLSGGEEKHAFCETVYTCTSILPDNKPRYLMGVGYAEDLVVCVALGMDMFDCVYPTRTARFGNALTRKGVINLRNQKFRNDIGPLEEGCSCPCCKTELEGGWGITRAYFNSLVSKETVGANLMTIHNVHFQLQLMRDMRESIIKDEFPSFVKNFFHEWNHGDKSNYPSWAVDALRMVNIDLLA.

Asp-98 serves as the catalytic Proton acceptor. Residues 98–102 (DSGGF), Asp-152, Gln-195, and Gly-222 contribute to the substrate site. The RNA binding stretch occupies residues 253-259 (GVGYAED). The active-site Nucleophile is the Asp-272. The RNA binding; important for wobble base 34 recognition stretch occupies residues 277–281 (TRTAR). Residues Cys-310, Cys-312, Cys-315, and His-347 each contribute to the Zn(2+) site.

Belongs to the queuine tRNA-ribosyltransferase family. As to quaternary structure, heterodimer of a catalytic subunit and an accessory subunit. Requires Zn(2+) as cofactor.

Its subcellular location is the cytoplasm. It localises to the nucleus. The catalysed reaction is guanosine(34) in tRNA + queuine = queuosine(34) in tRNA + guanine. Catalytic subunit of the queuine tRNA-ribosyltransferase (TGT) that catalyzes the base-exchange of a guanine (G) residue with queuine (Q) at position 34 (anticodon wobble position) in tRNAs with GU(N) anticodons (tRNA-Asp, -Asn, -His and -Tyr), resulting in the hypermodified nucleoside queuosine (7-(((4,5-cis-dihydroxy-2-cyclopenten-1-yl)amino)methyl)-7-deazaguanosine). Catalysis occurs through a double-displacement mechanism. The nucleophile active site attacks the C1' of nucleotide 34 to detach the guanine base from the RNA, forming a covalent enzyme-RNA intermediate. The proton acceptor active site deprotonates the incoming queuine, allowing a nucleophilic attack on the C1' of the ribose to form the product. In Schizosaccharomyces pombe (strain 972 / ATCC 24843) (Fission yeast), this protein is Queuine tRNA-ribosyltransferase catalytic subunit.